We begin with the raw amino-acid sequence, 422 residues long: MPLITVGINHKTAPVSIRERVAFAPEKMIDALSSLISENKANEAVIVSTCNRTELYCSVEDLSKVDDVIAWLGKYHGIALPELQQYCYTHADDDSVRHVMRVASGLDSLILGEPQILGQVKSAYAVSQEGSCIGPELESLFQRTFSVAKRVRTDTAIGENPVSIAFAAVSLAQRIFADIRNSTALLIGAGQTIELVARHLKENGIKHIIVANRTLARAQILADELNAEAIMLGDIGDYLSQADIVISSTASQLPIIGKGMVERATSQRRHSPMLLIDIAVPRDIEPEVEEVNDAYLYTVDDLHSVIEENVRARQDAAKAAEQMIEEGVDSYRRVVESRKVSDLIVTFRQSAEAIKNTELEKALKGLEMGQSPEQVLNKLAHGLMNKLIHAPTRYLRDAGADADQDALIIASNVLGIYEEKDN.

Substrate-binding positions include 49–52 (TCNR), Ser108, 113–115 (EPQ), and Gln119. Cys50 acts as the Nucleophile in catalysis. 188 to 193 (GAGQTI) provides a ligand contact to NADP(+).

This sequence belongs to the glutamyl-tRNA reductase family. As to quaternary structure, homodimer.

The enzyme catalyses (S)-4-amino-5-oxopentanoate + tRNA(Glu) + NADP(+) = L-glutamyl-tRNA(Glu) + NADPH + H(+). Its pathway is porphyrin-containing compound metabolism; protoporphyrin-IX biosynthesis; 5-aminolevulinate from L-glutamyl-tRNA(Glu): step 1/2. Its function is as follows. Catalyzes the NADPH-dependent reduction of glutamyl-tRNA(Glu) to glutamate 1-semialdehyde (GSA). This chain is Glutamyl-tRNA reductase, found in Marinomonas sp. (strain MWYL1).